A 160-amino-acid chain; its full sequence is Large ribosomal subunit protein uL11 (160 aa).

It belongs to the universal ribosomal protein uL11 family. As to quaternary structure, part of the ribosomal stalk of the 50S ribosomal subunit. Interacts with L10 and the large rRNA to form the base of the stalk. L10 forms an elongated spine to which L12 dimers bind in a sequential fashion forming a multimeric L10(L12)X complex.

Its function is as follows. Forms part of the ribosomal stalk which helps the ribosome interact with GTP-bound translation factors. The protein is Large ribosomal subunit protein uL11 of Methanothermobacter thermautotrophicus (strain ATCC 29096 / DSM 1053 / JCM 10044 / NBRC 100330 / Delta H) (Methanobacterium thermoautotrophicum).